The chain runs to 638 residues: Chaperone protein DnaK (638 aa).

A Phosphothreonine; by autocatalysis modification is found at threonine 200. Positions 599 to 623 are disordered; it reads LHMAATAEQQSASTGAGAGSSAKVD. The segment covering 609–620 has biased composition (low complexity); it reads SASTGAGAGSSA.

The protein belongs to the heat shock protein 70 family.

Functionally, acts as a chaperone. In Xylella fastidiosa (strain M12), this protein is Chaperone protein DnaK.